The sequence spans 2190 residues: Highly-reducing polyketide synthase 1 (2190 aa).

In terms of domain architecture, Ketosynthase family 3 (KS3) spans 6 to 431; sequence LTPVAIVGYA…GANAHVVLGA (426 aa). Residues Cys-179, His-315, and His-355 each act as for beta-ketoacyl synthase activity in the active site. The Malonyl-CoA:ACP transacylase (MAT) domain occupies 541-857; it reads FVFTGQGAQW…VSVLARGQNA (317 aa). Residues 925–1061 are N-terminal hotdog fold; that stretch reads NDLLGSLADW…GLVGVRNSPA (137 aa). The PKS/mFAS DH domain occupies 925 to 1246; it reads NDLLGSLADW…MTPLRESSGS (322 aa). The active-site Proton acceptor; for dehydratase activity is the His-957. The C-terminal hotdog fold stretch occupies residues 1089–1246; sequence TETVDVQAMY…MTPLRESSGS (158 aa). The active-site Proton donor; for dehydratase activity is Asp-1154. Residues 1494–1804 form the Enoyl reductase (ER) domain; sequence GSLDSFYFVD…SGKSMGKLVI (311 aa). Positions 1828–2005 constitute a Ketoreductase (KR) domain; it reads ASYLIVGGTG…GTSLDLTAVS (178 aa). Residues 2107-2184 enclose the Carrier domain; that stretch reads KALEVLYGAL…ELAKLISKKS (78 aa). Ser-2144 is subject to O-(pantetheine 4'-phosphoryl)serine.

Pantetheine 4'-phosphate serves as cofactor.

In terms of biological role, highly-reducing polyketide synthase; part of the gene cluster that mediates the biosynthesis of liamocins, glycolipids (also called heavy oils) composed of a single mannitol or arabitol headgroup linked to either three, four or even six 3,5-dihydroxydecanoic ester tail-groups. Within the pathway, PKS1 is responsible for biosynthesis of 3,5-dihydroxydecanoic acid from acetyl-CoA and malonyl-CoA. A phosphopantetheine transferase (PPTase) activates the HR-PKS. The esterase EST1 then catalyzes ester bond formation between 3,5-dihydroxydecanoic acid and mannitol (provided by the mannitol-1-phosphate 5-dehydrogenase and the NADP-dependent mannitol dehydrogenase) or arabinol (provided by the L-arabinitol 4-dehydrogenase). This is Highly-reducing polyketide synthase 1 from Aureobasidium melanogenum (Aureobasidium pullulans var. melanogenum).